Consider the following 775-residue polypeptide: Suppressor of glycerol defect protein 1 (775 aa).

Composition is skewed to basic residues over residues 1–11 (MRPIKKSRSLK) and 28–49 (RRGK…RISR). Disordered stretches follow at residues 1 to 101 (MRPI…LLDP) and 152 to 253 (IDDI…GGDK). 3 stretches are compositionally biased toward basic and acidic residues: residues 52-79 (NGYE…DAHR), 177-193 (TGDH…REGN), and 209-223 (DEFH…RMDP). Positions 262-463 (RRKLQGSLNK…ESITNLKENK (202 aa)) constitute an MIF4G domain. The MI domain maps to 565-689 (TLRTSIFVAL…PLTILKHVDF (125 aa)).

This sequence belongs to the CWC22 family.

The protein resides in the nucleus. The protein localises to the nucleolus. Its function is as follows. Involved in osmoregulatory glycerol response. The chain is Suppressor of glycerol defect protein 1 (sgd1) from Schizosaccharomyces pombe (strain 972 / ATCC 24843) (Fission yeast).